We begin with the raw amino-acid sequence, 754 residues long: LON peptidase N-terminal domain and RING finger protein 2 (754 aa).

TPR repeat units follow at residues 23–58 (IAQRLEEGDEAFRAGDYEMAAELFRSMLAGLAQPDR) and 59–91 (GLCLRLGDALARAGRLPEALGAFRGAARLGALR). The disordered stretch occupies residues 112–136 (PLSAENPGGEPEAPGEGGPAPEPRA). Residues 115 to 125 (AENPGGEPEAP) are compositionally biased toward low complexity. TPR repeat units follow at residues 197 to 230 (LRRLAGQARSLQRQQQPEAALLRCDQALELAPDD), 231 to 264 (NSLLLLRAELYLTMKNYEQALQDASAACQNEPLL), and 266 to 298 (KGHQVKAQALSGLGRSKEVLKEFLYCLALNPEC). A disordered region spans residues 398–439 (GLKRQFPDDVEDAPDLNAPGKIPKKDLSLQRSPNSETEESQG). Residues 426 to 439 (LQRSPNSETEESQG) are compositionally biased toward polar residues. Residues 447-483 (FECALCMRLLFEPVTTPCGHTFCLKCLERCLDHAPHC) form a TPR 6 repeat. Residues 449-487 (CALCMRLLFEPVTTPCGHTFCLKCLERCLDHAPHCPLCK) form an RING-type zinc finger. Positions 528–737 (MSELSNLTRD…AIRRILVIIT (210 aa)) constitute a Lon N-terminal domain.

This is LON peptidase N-terminal domain and RING finger protein 2 (LONRF2) from Homo sapiens (Human).